The sequence spans 183 residues: Holliday junction branch migration complex subunit RuvA (183 aa).

A domain I region spans residues methionine 1–leucine 63. Positions glutamate 64–asparagine 141 are domain II. Position 141 (asparagine 141) is a region of interest, flexible linker. Residues asparagine 141 to serine 183 form a domain III region.

It belongs to the RuvA family. Homotetramer. Forms an RuvA(8)-RuvB(12)-Holliday junction (HJ) complex. HJ DNA is sandwiched between 2 RuvA tetramers; dsDNA enters through RuvA and exits via RuvB. An RuvB hexamer assembles on each DNA strand where it exits the tetramer. Each RuvB hexamer is contacted by two RuvA subunits (via domain III) on 2 adjacent RuvB subunits; this complex drives branch migration. In the full resolvosome a probable DNA-RuvA(4)-RuvB(12)-RuvC(2) complex forms which resolves the HJ.

It localises to the cytoplasm. Its function is as follows. The RuvA-RuvB-RuvC complex processes Holliday junction (HJ) DNA during genetic recombination and DNA repair, while the RuvA-RuvB complex plays an important role in the rescue of blocked DNA replication forks via replication fork reversal (RFR). RuvA specifically binds to HJ cruciform DNA, conferring on it an open structure. The RuvB hexamer acts as an ATP-dependent pump, pulling dsDNA into and through the RuvAB complex. HJ branch migration allows RuvC to scan DNA until it finds its consensus sequence, where it cleaves and resolves the cruciform DNA. This chain is Holliday junction branch migration complex subunit RuvA, found in Helicobacter pylori (strain G27).